A 631-amino-acid chain; its full sequence is Probable potassium transport system protein Kup 1 (631 aa).

12 helical membrane-spanning segments follow: residues 17 to 37 (LALG…LYAL), 55 to 75 (LSLI…MIIF), 101 to 121 (PLFY…GMLT), 140 to 160 (LYPY…SLQA), 166 to 186 (IGYL…ILGI), 217 to 237 (FLLG…ADIG), 249 to 269 (FFIA…NLIV), 277 to 297 (PFFM…ATVA), 338 to 358 (IYVP…CLAF), 370 to 390 (IAVN…AVSI), 395 to 415 (TFNV…FLGA), and 420 to 440 (FITG…IMYS).

This sequence belongs to the HAK/KUP transporter (TC 2.A.72) family.

The protein resides in the cell inner membrane. It carries out the reaction K(+)(in) + H(+)(in) = K(+)(out) + H(+)(out). In terms of biological role, transport of potassium into the cell. Likely operates as a K(+):H(+) symporter. The polypeptide is Probable potassium transport system protein Kup 1 (Legionella pneumophila (strain Corby)).